Reading from the N-terminus, the 315-residue chain is Probable cytochrome c oxidase subunit 2 (315 aa).

The next 3 membrane-spanning stretches (helical) occupy residues 54–74 (IALI…PLPW), 96–116 (LLYI…FVCI), and 133–153 (VLIE…IAVP). His-235, Cys-270, Cys-274, and His-278 together coordinate Cu cation.

The protein belongs to the cytochrome c oxidase subunit 2 family. Cu cation serves as cofactor. Heme is required as a cofactor.

It localises to the cell membrane. The enzyme catalyses 4 Fe(II)-[cytochrome c] + O2 + 8 H(+)(in) = 4 Fe(III)-[cytochrome c] + 2 H2O + 4 H(+)(out). Subunits I and II form the functional core of the enzyme complex. Electrons originating in cytochrome c are transferred via heme a and Cu(A) to the binuclear center formed by heme a3 and Cu(B). In Rickettsia conorii (strain ATCC VR-613 / Malish 7), this protein is Probable cytochrome c oxidase subunit 2 (ctaC).